A 1043-amino-acid chain; its full sequence is Isoleucine--tRNA ligase (1043 aa).

The short motif at 49-59 (PFATGLPHYGH) is the 'HIGH' region element. Residues 592–596 (KMSKR) carry the 'KMSKS' region motif. K595 serves as a coordination point for ATP.

This sequence belongs to the class-I aminoacyl-tRNA synthetase family. IleS type 2 subfamily. In terms of assembly, monomer. Zn(2+) serves as cofactor.

The protein resides in the cytoplasm. The catalysed reaction is tRNA(Ile) + L-isoleucine + ATP = L-isoleucyl-tRNA(Ile) + AMP + diphosphate. In terms of biological role, catalyzes the attachment of isoleucine to tRNA(Ile). As IleRS can inadvertently accommodate and process structurally similar amino acids such as valine, to avoid such errors it has two additional distinct tRNA(Ile)-dependent editing activities. One activity is designated as 'pretransfer' editing and involves the hydrolysis of activated Val-AMP. The other activity is designated 'posttransfer' editing and involves deacylation of mischarged Val-tRNA(Ile). This is Isoleucine--tRNA ligase from Chlamydia caviae (strain ATCC VR-813 / DSM 19441 / 03DC25 / GPIC) (Chlamydophila caviae).